Consider the following 353-residue polypeptide: Photosystem II protein D1 (353 aa).

Thr2 bears the N-acetylthreonine mark. Phosphothreonine is present on Thr2. 3 helical membrane-spanning segments follow: residues 29-46 (YIGWFGVLMIPTLLTATS), 118-133 (HFLLGVACYMGREWEL), and 142-156 (WIAVAYSAPVAAATA). His118 serves as a coordination point for chlorophyll a. A pheophytin a-binding site is contributed by Tyr126. Asp170 and Glu189 together coordinate [CaMn4O5] cluster. Residues 197–218 (FHMLGVAGVFGGSLFSAMHGSL) form a helical membrane-spanning segment. His198 lines the chlorophyll a pocket. Residues His215 and 264-265 (SF) each bind a quinone. Position 215 (His215) interacts with Fe cation. His272 contacts Fe cation. A helical transmembrane segment spans residues 274-288 (FLAAWPVVGIWFTAL). [CaMn4O5] cluster is bound by residues His332, Glu333, Asp342, and Ala344. Positions 345-353 (AVESPSING) are excised as a propeptide.

Belongs to the reaction center PufL/M/PsbA/D family. As to quaternary structure, PSII is composed of 1 copy each of membrane proteins PsbA, PsbB, PsbC, PsbD, PsbE, PsbF, PsbH, PsbI, PsbJ, PsbK, PsbL, PsbM, PsbT, PsbX, PsbY, PsbZ, Psb30/Ycf12, at least 3 peripheral proteins of the oxygen-evolving complex and a large number of cofactors. It forms dimeric complexes. Requires The D1/D2 heterodimer binds P680, chlorophylls that are the primary electron donor of PSII, and subsequent electron acceptors. It shares a non-heme iron and each subunit binds pheophytin, quinone, additional chlorophylls, carotenoids and lipids. D1 provides most of the ligands for the Mn4-Ca-O5 cluster of the oxygen-evolving complex (OEC). There is also a Cl(-1) ion associated with D1 and D2, which is required for oxygen evolution. The PSII complex binds additional chlorophylls, carotenoids and specific lipids. as cofactor. Post-translationally, tyr-161 forms a radical intermediate that is referred to as redox-active TyrZ, YZ or Y-Z. In terms of processing, C-terminally processed by CTPA; processing is essential to allow assembly of the oxygen-evolving complex and thus photosynthetic growth.

It localises to the plastid. The protein localises to the chloroplast thylakoid membrane. The enzyme catalyses 2 a plastoquinone + 4 hnu + 2 H2O = 2 a plastoquinol + O2. Photosystem II (PSII) is a light-driven water:plastoquinone oxidoreductase that uses light energy to abstract electrons from H(2)O, generating O(2) and a proton gradient subsequently used for ATP formation. It consists of a core antenna complex that captures photons, and an electron transfer chain that converts photonic excitation into a charge separation. The D1/D2 (PsbA/PsbD) reaction center heterodimer binds P680, the primary electron donor of PSII as well as several subsequent electron acceptors. This is Photosystem II protein D1 from Sinapis alba (White mustard).